A 475-amino-acid chain; its full sequence is Aspartyl/glutamyl-tRNA(Asn/Gln) amidotransferase subunit B (475 aa).

Belongs to the GatB/GatE family. GatB subfamily. Heterotrimer of A, B and C subunits.

It carries out the reaction L-glutamyl-tRNA(Gln) + L-glutamine + ATP + H2O = L-glutaminyl-tRNA(Gln) + L-glutamate + ADP + phosphate + H(+). The catalysed reaction is L-aspartyl-tRNA(Asn) + L-glutamine + ATP + H2O = L-asparaginyl-tRNA(Asn) + L-glutamate + ADP + phosphate + 2 H(+). In terms of biological role, allows the formation of correctly charged Asn-tRNA(Asn) or Gln-tRNA(Gln) through the transamidation of misacylated Asp-tRNA(Asn) or Glu-tRNA(Gln) in organisms which lack either or both of asparaginyl-tRNA or glutaminyl-tRNA synthetases. The reaction takes place in the presence of glutamine and ATP through an activated phospho-Asp-tRNA(Asn) or phospho-Glu-tRNA(Gln). This is Aspartyl/glutamyl-tRNA(Asn/Gln) amidotransferase subunit B from Thermoanaerobacter pseudethanolicus (strain ATCC 33223 / 39E) (Clostridium thermohydrosulfuricum).